We begin with the raw amino-acid sequence, 236 residues long: Elastase-1 (236 aa).

A Peptidase S1 domain is found at 1–236; the sequence is VVGGRVAQPN…AYISWMNGIM (236 aa). Cys-30 and Cys-46 are disulfide-bonded. The Charge relay system role is filled by His-45. Residues Glu-59, Asn-61, Thr-64, Glu-66, and Glu-69 each contribute to the Ca(2+) site. Catalysis depends on Asp-93, which acts as the Charge relay system. Intrachain disulfides connect Cys-127–Cys-193, Cys-158–Cys-174, and Cys-183–Cys-213. Ser-187 acts as the Charge relay system in catalysis.

It belongs to the peptidase S1 family. Elastase subfamily. Ca(2+) serves as cofactor. Pancreas.

The protein localises to the secreted. It carries out the reaction Hydrolysis of proteins, including elastin. Preferential cleavage: Ala-|-Xaa.. In terms of biological role, acts upon elastin. In Salmo salar (Atlantic salmon), this protein is Elastase-1.